A 1019-amino-acid chain; its full sequence is Macrophage colony-stimulating factor 1 receptor 2 (1019 aa).

The signal sequence occupies residues 1 to 18; sequence MKSYCLLLSITLSCCCSA. The Extracellular segment spans residues 19–576; that stretch reads EDLPDPPSIH…LREHNSAFMS (558 aa). Ig-like C2-type domains are found at residues 37–109, 106–212, and 224–312; these read QAEA…IHLY, IHLY…LLVA, and QNKA…LIVL. Cysteine 52 and cysteine 92 are joined by a disulfide. 14 N-linked (GlcNAc...) asparagine glycosylation sites follow: asparagine 96, asparagine 148, asparagine 169, asparagine 249, asparagine 342, asparagine 346, asparagine 355, asparagine 369, asparagine 379, asparagine 408, asparagine 422, asparagine 429, asparagine 433, and asparagine 514. 2 disulfide bridges follow: cysteine 139-cysteine 193 and cysteine 239-cysteine 294. Ig-like C2-type domains lie at 383–474 and 487–567; these read STTV…LRIY and TLTC…VFHL. The cysteines at positions 490 and 552 are disulfide-linked. A helical transmembrane segment spans residues 577 to 597; that stretch reads ALIGAGSTAAILFLLLLVVFY. Topologically, residues 598-1019 are cytoplasmic; that stretch reads KWRQKPKYEI…LSVTNIYQLS (422 aa). Residues 601–633 form a regulatory juxtamembrane domain region; it reads QKPKYEIRWKIIESTEGNHYTFVDPTLLPYNYK. Phosphotyrosine; by autocatalysis is present on tyrosine 620. In terms of domain architecture, Protein kinase spans 641–963; the sequence is LRLGAVLGSG…MICQLIDRLL (323 aa). ATP-binding positions include 647–655 and lysine 674; that span reads LGSGAFGKV. 2 positions are modified to phosphotyrosine; by autocatalysis: tyrosine 756 and tyrosine 778. Aspartate 827 serves as the catalytic Proton acceptor. An activation loop region spans residues 845–867; sequence DFGLARDIQNDDSYIVQGNARLP. Tyrosine 858 and tyrosine 974 each carry phosphotyrosine; by autocatalysis. The disordered stretch occupies residues 970-1001; the sequence is NHQSYSNINETKKDDFKGGKSQRRGEEEEQRR. Residues 979–1001 are compositionally biased toward basic and acidic residues; it reads ETKKDDFKGGKSQRRGEEEEQRR. A Phosphotyrosine; by autocatalysis modification is found at tyrosine 1016.

It belongs to the protein kinase superfamily. Tyr protein kinase family. CSF-1/PDGF receptor subfamily. In terms of assembly, monomer. Homodimer. Interacts with CSF1. Post-translationally, autophosphorylated in response to CSF1 binding. autophosphorylation, leading to its degradation. Ubiquitinated. Becomes rapidly polyubiquitinated after autophosphorylation, leading to its degradation.

The protein resides in the cell membrane. The enzyme catalyses L-tyrosyl-[protein] + ATP = O-phospho-L-tyrosyl-[protein] + ADP + H(+). Present in an inactive conformation in the absence of bound ligand. CSF1 binding leads to dimerization and activation by autophosphorylation on tyrosine residues. Tyrosine-protein kinase that acts as a cell-surface receptor for CSF1 and plays an essential role in the regulation of survival, proliferation and differentiation of hematopoietic precursor cells, especially mononuclear phagocytes, such as macrophages and monocytes. Plays an important role in innate immunity and in inflammatory processes. Plays an important role in the regulation of osteoclast proliferation and differentiation, the regulation of bone resorption, and is required for normal bone development. Promotes reorganization of the actin cytoskeleton, regulates formation of membrane ruffles, cell adhesion and cell migration. Activates several signaling pathways in response to ligand binding. This chain is Macrophage colony-stimulating factor 1 receptor 2 (csf1r2), found in Takifugu rubripes (Japanese pufferfish).